A 439-amino-acid polypeptide reads, in one-letter code: Sodium-dependent phosphate transport protein 3 (439 aa).

Residues N47, N56, N68, and N69 are each glycosylated (N-linked (GlcNAc...) asparagine). The next 9 membrane-spanning stretches (helical) occupy residues 98-118 (INYG…IFGA), 130-150 (SLLT…VIMV), 183-203 (TIAG…GGLI), 211-231 (FIFY…FTVI), 273-293 (LPLW…TIIL), 317-337 (LPFI…DFLL), 350-369 (LFSS…LPFV), 374-396 (VITI…GFII), and 415-435 (GFGL…ISQV).

It belongs to the major facilitator superfamily. Sodium/anion cotransporter family. As to expression, expressed in the small intestine, kidney, spleen and testis. Not detected in fetal brain, bone marrow, and mammary gland.

It localises to the apical cell membrane. It catalyses the reaction 3 Na(+)(out) + phosphate(out) = 3 Na(+)(in) + phosphate(in). The catalysed reaction is urate(out) + n chloride(in) = urate(in) + n chloride(out). Its function is as follows. Acts as a membrane potential-dependent organic anion transporter, the transport requires a low concentration of chloride ions. Mediates chloride-dependent transport of urate. Can actively transport inorganic phosphate into cells via Na(+) cotransport. In Homo sapiens (Human), this protein is Sodium-dependent phosphate transport protein 3 (SLC17A2).